An 80-amino-acid polypeptide reads, in one-letter code: Mitotic-spindle organizing protein 1 (80 aa).

The protein belongs to the MOZART1 family. Part of the gamma-tubulin complex.

The protein resides in the cytoplasm. It is found in the cytoskeleton. Its subcellular location is the microtubule organizing center. The protein localises to the spindle pole body. In terms of biological role, required for gamma-tubulin complex recruitment to the microtubule organizing center (MTOC). The polypeptide is Mitotic-spindle organizing protein 1 (Pyricularia oryzae (strain 70-15 / ATCC MYA-4617 / FGSC 8958) (Rice blast fungus)).